Here is a 232-residue protein sequence, read N- to C-terminus: MSILQSVHNSFAPIHKEGYPFIIAFFVISLILGWVWSPLFWCGLVLTVWCIYFFRDPERVIPLNPNWIISPADGRISFVGPCIPPEELGLGNAEMIRISVFMDIFSCHINRVPISGKVESIIYHPGQFANAELDKASQFNERNGVVIDSKHGKIGVVQIAGAIARRIVCWSQEDDSVVTGQRFGLIRFGSRLDIYIPNEVKLRVTVGQTSIAGETVLGSFDDKSATTEFRFD.

Serine 190 serves as the catalytic Schiff-base intermediate with substrate; via pyruvic acid. Serine 190 carries the post-translational modification Pyruvic acid (Ser); by autocatalysis.

The protein belongs to the phosphatidylserine decarboxylase family. PSD-A subfamily. In terms of assembly, heterodimer of a large membrane-associated beta subunit and a small pyruvoyl-containing alpha subunit. Pyruvate serves as cofactor. Post-translationally, is synthesized initially as an inactive proenzyme. Formation of the active enzyme involves a self-maturation process in which the active site pyruvoyl group is generated from an internal serine residue via an autocatalytic post-translational modification. Two non-identical subunits are generated from the proenzyme in this reaction, and the pyruvate is formed at the N-terminus of the alpha chain, which is derived from the carboxyl end of the proenzyme. The post-translation cleavage follows an unusual pathway, termed non-hydrolytic serinolysis, in which the side chain hydroxyl group of the serine supplies its oxygen atom to form the C-terminus of the beta chain, while the remainder of the serine residue undergoes an oxidative deamination to produce ammonia and the pyruvoyl prosthetic group on the alpha chain.

The protein localises to the cell membrane. It catalyses the reaction a 1,2-diacyl-sn-glycero-3-phospho-L-serine + H(+) = a 1,2-diacyl-sn-glycero-3-phosphoethanolamine + CO2. Its pathway is phospholipid metabolism; phosphatidylethanolamine biosynthesis; phosphatidylethanolamine from CDP-diacylglycerol: step 2/2. Functionally, catalyzes the formation of phosphatidylethanolamine (PtdEtn) from phosphatidylserine (PtdSer). In Bartonella henselae (strain ATCC 49882 / DSM 28221 / CCUG 30454 / Houston 1) (Rochalimaea henselae), this protein is Phosphatidylserine decarboxylase proenzyme.